The primary structure comprises 1033 residues: Integrin alpha-IIb (1033 aa).

Residues 1–31 (MARASCAWHSLWLLQWTPLFLGPSAVPPVWA) form the signal peptide. Residues 32–988 (LNLDSEKFSV…TQLLRALEER (957 aa)) are Extracellular-facing. FG-GAP repeat units follow at residues 35–96 (DSEK…GGKC), 109–173 (NLGF…GRAE), 184–237 (SVYA…ISSY), 252–304 (TYDN…DSYY), 305–370 (QPLH…PQAL), 372–431 (TPTL…GLSP), and 434–495 (SQVL…VQDS). 2 N-linked (GlcNAc...) asparagine glycosylation sites follow: asparagine 46 and asparagine 75. Intrachain disulfides connect cysteine 87–cysteine 96, cysteine 138–cysteine 161, and cysteine 177–cysteine 197. Residues glutamate 273, aspartate 275, aspartate 277, threonine 280, glutamate 282, aspartate 327, asparagine 329, aspartate 331, arginine 333, aspartate 335, aspartate 395, aspartate 399, tyrosine 401, aspartate 403, aspartate 456, aspartate 458, asparagine 460, tyrosine 462, and aspartate 464 each coordinate Ca(2+). 2 disulfides stabilise this stretch: cysteine 503-cysteine 514 and cysteine 520-cysteine 575. The N-linked (GlcNAc...) asparagine glycan is linked to asparagine 600. Cystine bridges form between cysteine 632–cysteine 638, cysteine 704–cysteine 717, cysteine 856–cysteine 916, and cysteine 905–cysteine 911. Asparagine 710 is a glycosylation site (N-linked (GlcNAc...) asparagine). Asparagine 957 is a glycosylation site (N-linked (GlcNAc...) asparagine). Residues 989–1014 (AIPVWWVLVGVLGGLLLLTLLVLAMW) traverse the membrane as a helical segment. Residues 1015-1033 (KAGFFKRNRPPLEEDEEEE) are Cytoplasmic-facing. The GFFKR motif signature appears at 1017–1021 (GFFKR).

Belongs to the integrin alpha chain family. As to quaternary structure, heterodimer of an alpha and a beta subunit. The alpha subunit is composed of a heavy and a light chain linked by a disulfide bond. Alpha-IIb associates with beta-3. Directly interacts with RNF181. Interacts (via C-terminus cytoplasmic tail region) with CIB1; the interaction is direct and calcium-dependent. Interacts (via C-terminus cytoplasmic tail region) with CIB2, CIB3 and CIB4; the interactions are stabilized/increased in a calcium and magnesium-dependent manner. ITGA2B:ITGB3 interacts with PPIA/CYPA; the interaction is ROS and PPIase activity-dependent and is increased in the presence of thrombin. ITGA2B:ITGB3 interacts with SELP (via C-type lectin domain); the interaction mediates cell-cell interaction and adhesion. Cleaved by ELANE; the cleavage promotes activation of platelet fibrinogen receptor integrin alpha-IIb/beta-3.

The protein localises to the membrane. In terms of biological role, integrin alpha-IIb/beta-3 is a receptor for fibronectin, fibrinogen, plasminogen, prothrombin, thrombospondin and vitronectin. It recognizes the sequence R-G-D in a wide array of ligands. It recognizes the sequence H-H-L-G-G-G-A-K-Q-A-G-D-V in fibrinogen gamma chain. Following activation integrin alpha-IIb/beta-3 brings about platelet/platelet interaction through binding of soluble fibrinogen. This step leads to rapid platelet aggregation which physically plugs ruptured endothelial cell surface. In Mus musculus (Mouse), this protein is Integrin alpha-IIb (Itga2b).